The chain runs to 476 residues: UDP-N-acetylmuramoylalanine--D-glutamate ligase (476 aa).

122-128 contacts ATP; sequence GSNAKST.

It belongs to the MurCDEF family.

It is found in the cytoplasm. It catalyses the reaction UDP-N-acetyl-alpha-D-muramoyl-L-alanine + D-glutamate + ATP = UDP-N-acetyl-alpha-D-muramoyl-L-alanyl-D-glutamate + ADP + phosphate + H(+). The protein operates within cell wall biogenesis; peptidoglycan biosynthesis. Cell wall formation. Catalyzes the addition of glutamate to the nucleotide precursor UDP-N-acetylmuramoyl-L-alanine (UMA). The chain is UDP-N-acetylmuramoylalanine--D-glutamate ligase from Psychrobacter arcticus (strain DSM 17307 / VKM B-2377 / 273-4).